Here is a 309-residue protein sequence, read N- to C-terminus: Polyprenal reductase (309 aa).

Topologically, residues 1 to 3 (MFH) are cytoplasmic. The helical transmembrane segment at 4-24 (ILSIVNIIWLLLALCFGAAFC) threads the bilayer. Residues 25–67 (LNKFSVKLPNRVEHVFQDFIRYGKTKENIKRASWQLVFDLSKR) lie on the Lumenal side of the membrane. The chain crosses the membrane as a helical span at residues 68–88 (YFYHFYVVSVMWNGLLLLFSI). At 89-114 (RSVVMSEAFPDWIIDVLGSLTGRSRG) the chain is on the cytoplasmic side. The chain crosses the membrane as a helical span at residues 115–135 (AWNEIHLSTLLLQVLLWVHTL). The Lumenal segment spans residues 136–150 (RRLLECLFVSVFSDG). A helical transmembrane segment spans residues 151–171 (VINVVQYAFGLSYYIILGLTV). The Cytoplasmic portion of the chain corresponds to 172-185 (LCTNDSLPQSESVS). The chain crosses the membrane as a helical span at residues 186–206 (FFNQLTWYHVVGTLLFFWASF). The Lumenal segment spans residues 207–255 (LQHQSLSLLAKMRTDSSGKVETLAHKMPCGGWFELVSCPHYLAELLIYA). Residues 256–276 (AMCVCCGCASLTWWMVVLYVL) form a helical membrane-spanning segment. Topologically, residues 277–309 (CNQALAAQLCHEYYRSKFKTYPHHRKAFIPFVL) are cytoplasmic.

The protein belongs to the steroid 5-alpha reductase family. Polyprenal reductase subfamily.

It localises to the endoplasmic reticulum membrane. It carries out the reaction a di-trans,poly-cis-dolichal + NADP(+) = a di-trans,poly-cis-polyprenal + NADPH + H(+). The enzyme catalyses a 3-oxo-5alpha-steroid + NADP(+) = a 3-oxo-Delta(4)-steroid + NADPH + H(+). It catalyses the reaction androst-4-ene-3,17-dione + NADPH + H(+) = 5alpha-androstan-3,17-dione + NADP(+). The catalysed reaction is 17beta-hydroxy-5alpha-androstan-3-one + NADP(+) = testosterone + NADPH + H(+). Its pathway is protein modification; protein glycosylation. In terms of biological role, plays a key role in early steps of protein N-linked glycosylation by being involved in the conversion of polyprenol into dolichol. Acts as a polyprenal reductase that mediates the reduction of polyprenal into dolichal in a NADP-dependent mechanism. Dolichols are required for the synthesis of dolichol-linked monosaccharides and the oligosaccharide precursor used for N-glycosylation. Also able to convert testosterone (T) into 5-alpha-dihydrotestosterone (DHT). This is Polyprenal reductase (srd5a3) from Danio rerio (Zebrafish).